Consider the following 518-residue polypeptide: Glutamate--cysteine ligase (518 aa).

The protein belongs to the glutamate--cysteine ligase type 1 family. Type 1 subfamily.

It catalyses the reaction L-cysteine + L-glutamate + ATP = gamma-L-glutamyl-L-cysteine + ADP + phosphate + H(+). It functions in the pathway sulfur metabolism; glutathione biosynthesis; glutathione from L-cysteine and L-glutamate: step 1/2. The sequence is that of Glutamate--cysteine ligase from Shigella boydii serotype 4 (strain Sb227).